The following is a 689-amino-acid chain: Putative pentatricopeptide repeat-containing protein At3g15130 (689 aa).

PPR repeat units follow at residues 5 to 39, 40 to 70, 71 to 105, 106 to 140, 141 to 171, 172 to 206, 209 to 243, 246 to 276, 277 to 311, 312 to 342, 347 to 377, 378 to 412, 413 to 448, and 449 to 479; these read QRQN…GSGL, NLIT…MPER, NVVS…GIYP, NEFT…GFEM, MVEV…IVDR, SLIS…NIKE, DEFT…GFHC, SATI…IKEK, TMIS…NSQI, DSFA…AVKL, ETSV…MQLK, DVIS…NIEP, DEVC…GIKP, and RVEH…MPIK. The type E motif stretch occupies residues 484–559; that stretch reads IWQTLLSLCR…EAGMSWVEIE (76 aa). Positions 560-590 are type E(+) motif; it reads REVHFFRSGEDSHPLTPVIQETLKEAERRLR. The segment at 592–689 is type DYW motif; the sequence is ELGYVYGLKH…DGCCSCGDYW (98 aa).

The protein belongs to the PPR family. PCMP-H subfamily.

The sequence is that of Putative pentatricopeptide repeat-containing protein At3g15130 (PCMP-H86) from Arabidopsis thaliana (Mouse-ear cress).